A 1425-amino-acid polypeptide reads, in one-letter code: Protein NAP1 (1425 aa).

3 stretches are compositionally biased toward polar residues: residues 1 to 20 (MANS…PTSV), 1299 to 1312 (TPLS…SPSV), and 1320 to 1329 (SMKNSTTPQR). Disordered stretches follow at residues 1 to 24 (MANS…RSRE) and 1299 to 1425 (TPLS…KQHN). The segment covering 1362–1405 (SETGNSRNNENNNNNKQRGSSRRSGPLDYSSSHKGGSGSNSTGP) has biased composition (low complexity).

It belongs to the HEM-1/HEM-2 family. In terms of assembly, binds PIR. In terms of tissue distribution, expressed in roots, root hairs, hypocotyls, cotyledons, stems, leaves, trichomes, and flowers.

Functionally, involved in regulation of actin and microtubule organization. Part of a WAVE complex that activates the Arp2/3 complex. This is Protein NAP1 (NAP1) from Arabidopsis thaliana (Mouse-ear cress).